A 265-amino-acid polypeptide reads, in one-letter code: Ribosomal RNA small subunit methyltransferase A (265 aa).

S-adenosyl-L-methionine is bound by residues His17, Leu19, Gly44, Glu65, Asp90, and Asn112.

The protein belongs to the class I-like SAM-binding methyltransferase superfamily. rRNA adenine N(6)-methyltransferase family. RsmA subfamily.

It is found in the cytoplasm. It carries out the reaction adenosine(1518)/adenosine(1519) in 16S rRNA + 4 S-adenosyl-L-methionine = N(6)-dimethyladenosine(1518)/N(6)-dimethyladenosine(1519) in 16S rRNA + 4 S-adenosyl-L-homocysteine + 4 H(+). Its function is as follows. Specifically dimethylates two adjacent adenosines (A1518 and A1519) in the loop of a conserved hairpin near the 3'-end of 16S rRNA in the 30S particle. May play a critical role in biogenesis of 30S subunits. The protein is Ribosomal RNA small subunit methyltransferase A of Xylella fastidiosa (strain 9a5c).